Here is a 175-residue protein sequence, read N- to C-terminus: RNA pyrophosphohydrolase (175 aa).

One can recognise a Nudix hydrolase domain in the interval 6 to 149; the sequence is GYRPNVGIVI…KRDVYRRVMK (144 aa). A Nudix box motif is present at residues 38-59; the sequence is GGINPGETAEQAMYRELFEEVG.

Belongs to the Nudix hydrolase family. RppH subfamily. A divalent metal cation is required as a cofactor.

Accelerates the degradation of transcripts by removing pyrophosphate from the 5'-end of triphosphorylated RNA, leading to a more labile monophosphorylated state that can stimulate subsequent ribonuclease cleavage. This is RNA pyrophosphohydrolase from Erwinia tasmaniensis (strain DSM 17950 / CFBP 7177 / CIP 109463 / NCPPB 4357 / Et1/99).